The chain runs to 147 residues: Anti-sigma F factor (147 aa).

The protein belongs to the anti-sigma-factor family.

It carries out the reaction L-seryl-[protein] + ATP = O-phospho-L-seryl-[protein] + ADP + H(+). It catalyses the reaction L-threonyl-[protein] + ATP = O-phospho-L-threonyl-[protein] + ADP + H(+). Binds to sigma F and blocks its ability to form an RNA polymerase holoenzyme (E-sigma F). Phosphorylates SpoIIAA on a serine residue. This phosphorylation may enable SpoIIAA to act as an anti-anti-sigma factor that counteracts SpoIIAB and thus releases sigma F from inhibition. The protein is Anti-sigma F factor of Priestia megaterium (Bacillus megaterium).